The chain runs to 97 residues: MKIEKCGWSEGLTSIKGNCHNFYTAISKDVTYKELKNLLNSKNIMLIDVREIWEILEYQKIPESINVPLDEVGEALQMNPRDFKEKYNEVKPSKSDS.

The 53-residue stretch at 32–84 (YKELKNLLNSKNIMLIDVREIWEILEYQKIPESINVPLDEVGEALQMNPRDFK) folds into the Rhodanese domain. Lysine 84 is subject to N6-succinyllysine.

In Homo sapiens (Human), this protein is Thiosulfate sulfurtransferase/rhodanese-like domain-containing protein 3 (TSTD3).